Consider the following 534-residue polypeptide: Phosphoenolpyruvate carboxykinase (ATP) (534 aa).

Residues R59, Y200, and K206 each coordinate substrate. ATP is bound by residues K206, H225, and 242 to 250 (GLSGTGKTT). K206 and H225 together coordinate Mn(2+). Position 263 (D263) interacts with Mn(2+). Residues E291, R327, 443 to 444 (RI), and T449 each bind ATP. Residue R327 participates in substrate binding.

It belongs to the phosphoenolpyruvate carboxykinase (ATP) family. The cofactor is Mn(2+).

The protein resides in the cytoplasm. The enzyme catalyses oxaloacetate + ATP = phosphoenolpyruvate + ADP + CO2. It participates in carbohydrate biosynthesis; gluconeogenesis. Involved in the gluconeogenesis. Catalyzes the conversion of oxaloacetate (OAA) to phosphoenolpyruvate (PEP) through direct phosphoryl transfer between the nucleoside triphosphate and OAA. The protein is Phosphoenolpyruvate carboxykinase (ATP) of Agathobacter rectalis (strain ATCC 33656 / DSM 3377 / JCM 17463 / KCTC 5835 / VPI 0990) (Eubacterium rectale).